The primary structure comprises 2175 residues: Non-reducing polyketide synthase PKS1 (2175 aa).

An N-terminal acylcarrier protein transacylase domain (SAT) region spans residues 5–242; sequence LLFGDQTAEQ…VSIPIYGPYH (238 aa). One can recognise a Ketosynthase family 3 (KS3) domain in the interval 369–801; that stretch reads TDKIAIVGMA…GGNTALLIED (433 aa). Catalysis depends on for beta-ketoacyl synthase activity residues Cys541, His676, and His719. The malonyl-CoA:ACP transacylase (MAT) domain stretch occupies residues 900-1212; the sequence is FCFTGQGSQY…ISTSICHLFT (313 aa). Ser988 serves as the catalytic For acyl/malonyl transferase activity. The interval 1285–1604 is product template (PT) domain; the sequence is STSCQNVISE…RKVLNVFLPP (320 aa). The segment at 1289 to 1424 is N-terminal hotdog fold; sequence QNVISEEFDG…CTIRYEDKAV (136 aa). The region spanning 1289 to 1599 is the PKS/mFAS DH domain; that stretch reads QNVISEEFDG…FQQIPRKVLN (311 aa). The active-site Proton acceptor; for dehydratase activity is His1321. Positions 1452–1599 are C-terminal hotdog fold; sequence AHKVQRGMAY…FQQIPRKVLN (148 aa). The Proton donor; for dehydratase activity role is filled by Asp1512. Residues 1640–1664 are disordered; sequence PVRKSAGPAKAAAAPSMPKPSKVAA. Residues 1643–1664 show a composition bias toward low complexity; that stretch reads KSAGPAKAAAAPSMPKPSKVAA. Positions 1666 to 1743 constitute a Carrier 1 domain; the sequence is KPAGSMVDKV…EMKKYFSQFN (78 aa). Ser1703 is subject to O-(pantetheine 4'-phosphoryl)serine. Residues 1766–1804 form a disordered region; it reads ATPFDEMSTPASSAPSVPQSDAGKPSPDSPTGDSLSDDV. A compositionally biased stretch (polar residues) spans 1774-1784; sequence TPASSAPSVPQ. The Carrier 2 domain occupies 1801-1878; the sequence is SDDVGDVSIA…DIENALGMRP (78 aa). The residue at position 1838 (Ser1838) is an O-(pantetheine 4'-phosphoryl)serine. The interval 1879–1899 is disordered; that stretch reads KPKAVGPKLSKPSTKTDMNEV. The span at 1889-1899 shows a compositional bias: polar residues; that stretch reads KPSTKTDMNEV. A claisen cyclase domain region spans residues 1932 to 2158; it reads KVFFLPDGSG…GHHFSMMKDP (227 aa). The For Claisen cyclase activity role is filled by Ser2002.

The cofactor is pantetheine 4'-phosphate.

The enzyme catalyses 6 malonyl-CoA + acetyl-CoA + 6 H(+) = naphtopyrone YWA1 + 6 CO2 + 7 CoA + H2O. The protein operates within pigment biosynthesis; melanin biosynthesis. Non-reducing polyketide synthase; part of the gene cluster 29 that mediates the biosynthesis of mediates the biosynthesis of dihydroxynaphthalene (DHN)-melanin, a bluish-green pigment and a structural component of the conidial wall. The first step of the pathway is the production of the heptaketide naphtopyrone YWA1 by the polyketide synthase PKS1 though condensation of acetyl-CoA with malonyl-CoA. The polypeptide is Non-reducing polyketide synthase PKS1 (Zymoseptoria tritici (strain CBS 115943 / IPO323) (Speckled leaf blotch fungus)).